The primary structure comprises 251 residues: ATP synthase subunit a (251 aa).

Helical transmembrane passes span 29–49 (FTQS…ITLV), 56–73 (LVPG…EFIA), 87–107 (FVPL…FGMI), 117–137 (IIVT…YGFM), 159–181 (LIVA…RLFA), 192–212 (IFAG…LSPL), and 218–238 (VAIT…FATL).

It belongs to the ATPase A chain family. As to quaternary structure, F-type ATPases have 2 components, CF(1) - the catalytic core - and CF(0) - the membrane proton channel. CF(1) has five subunits: alpha(3), beta(3), gamma(1), delta(1), epsilon(1). CF(0) has three main subunits: a(1), b(2) and c(9-12). The alpha and beta chains form an alternating ring which encloses part of the gamma chain. CF(1) is attached to CF(0) by a central stalk formed by the gamma and epsilon chains, while a peripheral stalk is formed by the delta and b chains.

Its subcellular location is the cell inner membrane. Key component of the proton channel; it plays a direct role in the translocation of protons across the membrane. The sequence is that of ATP synthase subunit a from Methylobacterium sp. (strain 4-46).